Here is a 220-residue protein sequence, read N- to C-terminus: Large ribosomal subunit protein uL16 (220 aa).

Belongs to the universal ribosomal protein uL16 family. As to quaternary structure, component of the large ribosomal subunit. Mature ribosomes consist of a small (40S) and a large (60S) subunit. The 40S subunit contains about 32 different proteins and 1 molecule of RNA (18S). The 60S subunit contains 45 different proteins and 3 molecules of RNA (25S, 5.8S and 5S).

It localises to the cytoplasm. Its function is as follows. Component of the ribosome, a large ribonucleoprotein complex responsible for the synthesis of proteins in the cell. The small ribosomal subunit (SSU) binds messenger RNAs (mRNAs) and translates the encoded message by selecting cognate aminoacyl-transfer RNA (tRNA) molecules. The large subunit (LSU) contains the ribosomal catalytic site termed the peptidyl transferase center (PTC), which catalyzes the formation of peptide bonds, thereby polymerizing the amino acids delivered by tRNAs into a polypeptide chain. The nascent polypeptides leave the ribosome through a tunnel in the LSU and interact with protein factors that function in enzymatic processing, targeting, and the membrane insertion of nascent chains at the exit of the ribosomal tunnel. This chain is Large ribosomal subunit protein uL16, found in Candida albicans (strain SC5314 / ATCC MYA-2876) (Yeast).